The primary structure comprises 571 residues: Proline--tRNA ligase (571 aa).

It belongs to the class-II aminoacyl-tRNA synthetase family. ProS type 1 subfamily. As to quaternary structure, homodimer.

The protein resides in the cytoplasm. It catalyses the reaction tRNA(Pro) + L-proline + ATP = L-prolyl-tRNA(Pro) + AMP + diphosphate. In terms of biological role, catalyzes the attachment of proline to tRNA(Pro) in a two-step reaction: proline is first activated by ATP to form Pro-AMP and then transferred to the acceptor end of tRNA(Pro). As ProRS can inadvertently accommodate and process non-cognate amino acids such as alanine and cysteine, to avoid such errors it has two additional distinct editing activities against alanine. One activity is designated as 'pretransfer' editing and involves the tRNA(Pro)-independent hydrolysis of activated Ala-AMP. The other activity is designated 'posttransfer' editing and involves deacylation of mischarged Ala-tRNA(Pro). The misacylated Cys-tRNA(Pro) is not edited by ProRS. The sequence is that of Proline--tRNA ligase from Haemophilus ducreyi (strain 35000HP / ATCC 700724).